A 261-amino-acid chain; its full sequence is Small ribosomal subunit protein eS1B (261 aa).

The segment covering 1 to 18 has biased composition (basic residues); it reads MTLGKNKRISKGGKRGKK. The interval 1–23 is disordered; it reads MTLGKNKRISKGGKRGKKKAQET.

This sequence belongs to the eukaryotic ribosomal protein eS1 family. As to quaternary structure, component of the small ribosomal subunit. Mature ribosomes consist of a small (40S) and a large (60S) subunit. The 40S subunit contains about 33 different proteins and 1 molecule of RNA (18S). The 60S subunit contains about 49 different proteins and 3 molecules of RNA (25S, 5.8S and 5S).

Its subcellular location is the cytoplasm. This is Small ribosomal subunit protein eS1B from Trypanosoma cruzi (strain CL Brener).